Consider the following 493-residue polypeptide: MAKIMIQGTASSVGKSLIVAALCRIFKQDGYSVCPFKSQNMSLNSYITLDGKEMGRAQVVQAYAAGLEPEAYMNPILLKPTSDKKCQIIVNGKVYGNSTAMGYHNLKLRFKDMLKEHFNKLEEDFDIVVMEGAGSPAEINLRDRDIVNMGMAELVDAPVLLVGDIDKGGVFASLAGTMLLLKDGEKERVKGTIINKFRGDVEILKPGLDMLEDIVHIPCLGVVPYTRLQLEDEDGAVEFNKKAYAPIDIAVIKMPHISNFTDLDALKSEEDVSIRFITSKEEFKEPDLLVIPGSKNTIEDLLYLRKCGLEESIKEYSKDGKIVGICGGYQVLGSKIKDPYKVETDLGEIDGLNLLDMETTFEKEKVTTRVSAKLIDEKIENTVYGYEIHMGISEYSENVKPLFKIYDKNGEKVDYFDGAINEKGNVMGTYIHGVFDGVSFREKIINELRVKKGLKKKKSQVYEHMREKELDKLADIVRQSLDMKKIYSIIGMK.

The GATase cobBQ-type domain maps to 246–440 (PIDIAVIKMP…IHGVFDGVSF (195 aa)). The active-site Nucleophile is Cys-326. His-432 is a catalytic residue.

Belongs to the CobB/CobQ family. CobQ subfamily.

It functions in the pathway cofactor biosynthesis; adenosylcobalamin biosynthesis. Functionally, catalyzes amidations at positions B, D, E, and G on adenosylcobyrinic A,C-diamide. NH(2) groups are provided by glutamine, and one molecule of ATP is hydrogenolyzed for each amidation. The chain is Cobyric acid synthase from Clostridium botulinum (strain Langeland / NCTC 10281 / Type F).